The primary structure comprises 905 residues: Alanine--tRNA ligase (905 aa).

Residues H595, H599, C696, and H700 each coordinate Zn(2+).

This sequence belongs to the class-II aminoacyl-tRNA synthetase family. Requires Zn(2+) as cofactor.

The protein resides in the cytoplasm. It carries out the reaction tRNA(Ala) + L-alanine + ATP = L-alanyl-tRNA(Ala) + AMP + diphosphate. In terms of biological role, catalyzes the attachment of alanine to tRNA(Ala) in a two-step reaction: alanine is first activated by ATP to form Ala-AMP and then transferred to the acceptor end of tRNA(Ala). Also edits incorrectly charged Ser-tRNA(Ala) and Gly-tRNA(Ala) via its editing domain. The protein is Alanine--tRNA ligase of Anaeromyxobacter dehalogenans (strain 2CP-C).